The sequence spans 294 residues: Small ribosomal subunit biogenesis GTPase RsgA 2, mitochondrial (294 aa).

The N-terminal 68 residues, 1-68 (MQTFSSAAAL…RSFLAPVLPL (68 aa)), are a transit peptide targeting the mitochondrion. In terms of domain architecture, CP-type G spans 155-294 (VSEVLDPPVA…VSFFLSYFIL (140 aa)). 255 to 263 (GPSGVGKSS) contacts GTP.

This sequence belongs to the TRAFAC class YlqF/YawG GTPase family.

It is found in the mitochondrion. In Arabidopsis thaliana (Mouse-ear cress), this protein is Small ribosomal subunit biogenesis GTPase RsgA 2, mitochondrial.